A 200-amino-acid chain; its full sequence is Casparian strip membrane protein 1 (200 aa).

The Cytoplasmic portion of the chain corresponds to 1 to 38 (MKSGDHAAIDVPESSAVAKGKAPLIATPREQKSGFKKG). The chain crosses the membrane as a helical span at residues 39–59 (LGIFDFLLRLGAIIAALAAAA). Over 60–86 (TMGTSDETLPFFTQFFQFEASYDDLPT) the chain is Extracellular. Residues 87–107 (FMFFVIAMALIGGYLVLSLPF) traverse the membrane as a helical segment. Residues 108 to 121 (SIVTIVRPHAVAPR) are Cytoplasmic-facing. A helical transmembrane segment spans residues 122–142 (LLLFILDIVALTLTTAAGAAA). Over 143–171 (AAIVYLAHNGNPNTNWLAICQQFGDFCQE) the chain is Extracellular. The chain crosses the membrane as a helical span at residues 172–192 (VSGAVVASFVTVVVLMSLVLL). Topologically, residues 193–200 (SGVALKKH) are cytoplasmic.

It belongs to the Casparian strip membrane proteins (CASP) family. In terms of assembly, homodimer and heterodimers.

It is found in the cell membrane. Its function is as follows. Regulates membrane-cell wall junctions and localized cell wall deposition. Required for establishment of the Casparian strip membrane domain (CSD) and the subsequent formation of Casparian strips, a cell wall modification of the root endodermis that determines an apoplastic barrier between the intraorganismal apoplasm and the extraorganismal apoplasm and prevents lateral diffusion. This chain is Casparian strip membrane protein 1, found in Theobroma cacao (Cacao).